The chain runs to 464 residues: MLKIFNTLTSTKEIFTPIKKNRVNLYVCGVTVYDFCHIGHGRTFVVFDMIVRYLRFSGFQVKYVRNITDIDDKIISKSTKEKKKINTFTASMIKEMHKDFDLLGISVPDEEPRVTDYIDNIIRIITTLIKKKHAYIHKNGDVIFSIDSDPNYGTLSRQSLTSLESGSRIPLNNMKKNPLDFILWKSSNKEEYSWDSPWGKGRPGWHIECSAITNVFFNNSIDIHGGGSDLLFPHHENERSQSICFNNKSMINFWMHTGMVILNNKKMSKSLGNVYFLRNILKDCDAEVLRYFFLSTHYRHPIYYCEKNLDQAYTSLKYLYTALYDTNPFFNNEEGLNFELEFYNAMNDDFNTPAVFSIFFKIARKINFLKNKDILKTNKFAFRLKYLANNLGFLFQDPKEFLQKKTTLNLLTLKEIQLLIEKRNIARQSKLWQEADNIRKKLMSLDIILEDLPDKTIWRKNKKS.

Residue C28 participates in Zn(2+) binding. The short motif at 30–40 (VTVYDFCHIGH) is the 'HIGH' region element. 3 residues coordinate Zn(2+): C209, H234, and E238. Positions 266–270 (KMSKS) match the 'KMSKS' region motif. ATP is bound at residue K269.

This sequence belongs to the class-I aminoacyl-tRNA synthetase family. As to quaternary structure, monomer. Zn(2+) is required as a cofactor.

The protein localises to the cytoplasm. The catalysed reaction is tRNA(Cys) + L-cysteine + ATP = L-cysteinyl-tRNA(Cys) + AMP + diphosphate. The protein is Cysteine--tRNA ligase (cysS) of Buchnera aphidicola subsp. Acyrthosiphon pisum (strain APS) (Acyrthosiphon pisum symbiotic bacterium).